Reading from the N-terminus, the 604-residue chain is 2-isopropylmalate synthase 2, mitochondrial (604 aa).

The N-terminal 50 residues, 1-50, are a transit peptide targeting the mitochondrion; the sequence is MVKHSFIALAEHASKLRRSIPPVKLTYKNMLRDPSVKYRAFAPPKMVKRI. The Pyruvate carboxyltransferase domain occupies 60–335; the sequence is PRWLSTDLRD…SPNLDFSDLT (276 aa). Positions 69, 274, 276, and 310 each coordinate a divalent metal cation.

Belongs to the alpha-IPM synthase/homocitrate synthase family. LeuA type 2 subfamily. In terms of assembly, homodimer. Requires a divalent metal cation as cofactor.

It is found in the mitochondrion. The enzyme catalyses 3-methyl-2-oxobutanoate + acetyl-CoA + H2O = (2S)-2-isopropylmalate + CoA + H(+). It participates in amino-acid biosynthesis; L-leucine biosynthesis; L-leucine from 3-methyl-2-oxobutanoate: step 1/4. Catalyzes the condensation of the acetyl group of acetyl-CoA with 3-methyl-2-oxobutanoate (2-oxoisovalerate) to form 3-carboxy-3-hydroxy-4-methylpentanoate (2-isopropylmalate). Redundant to LEU4, responsible for about 20% of alpha-IPMS activity. Involved in leucine synthesis. The chain is 2-isopropylmalate synthase 2, mitochondrial from Saccharomyces cerevisiae (strain ATCC 204508 / S288c) (Baker's yeast).